The following is a 312-amino-acid chain: Cytochrome c biogenesis protein CcsA (312 aa).

The next 8 membrane-spanning stretches (helical) occupy residues 18-38, 48-68, 73-93, 102-122, 148-168, 216-236, 250-267, and 279-299; these read LGILIFYFLLINLPISLLALF, FFTILINLFIALQLIFRWILS, ISNLYESLYFLVWGISLGQLL, IIPVIAIPIELLTIAFACFVL, VMLSYAALIIGSLLSASVLFI, SILVGFVLLTLGLITGAIWAN, TWAFISWLFYAAYLHMRI, and FATSGFFVVLICYLGVNFLGI.

This sequence belongs to the CcmF/CycK/Ccl1/NrfE/CcsA family. As to quaternary structure, may interact with ccs1.

It is found in the cellular thylakoid membrane. Functionally, required during biogenesis of c-type cytochromes (cytochrome c6 and cytochrome f) at the step of heme attachment. The protein is Cytochrome c biogenesis protein CcsA of Prochlorococcus marinus (strain MIT 9515).